The primary structure comprises 430 residues: WD repeat-containing protein jip5 (430 aa).

WD repeat units lie at residues 9–48 (PLSS…AAAE), 72–111 (RHKG…VTSK), 117–158 (TNTD…SFKS), 215–262 (DQEE…DQSE), 272–318 (AGGE…GVVE), and 323–360 (DDIE…EEEE). Acidic residues predominate over residues 356–374 (EEEEEEEEEEQEDIEDNDD). Residues 356 to 430 (EEEEEEEEEE…NGILKFKGME (75 aa)) form a disordered region. Residues 382 to 397 (HALERDSDDSDARADS) are compositionally biased toward basic and acidic residues. A compositionally biased stretch (basic residues) spans 405–416 (RKKRKKKKKGKK).

Belongs to the WD repeat WDR55 family.

The protein resides in the nucleus. The protein localises to the nucleolus. The sequence is that of WD repeat-containing protein jip5 (jip5) from Botryotinia fuckeliana (strain B05.10) (Noble rot fungus).